Here is a 271-residue protein sequence, read N- to C-terminus: GATA transcription factor 19 (271 aa).

The segment at 1-23 (MAAEPPADGRDPPADDGAAGDGA) is disordered. The Tify domain maps to 33 to 68 (LSAASEQLTLVYQGEVYVFDPVPPQKVQAVLLVLGG). The region spanning 95–137 (RVASLMRFREKRKERCFDKKIRYSVRKEVAQKMKRRKGQFAGR) is the CCT domain. The GATA-type zinc-finger motif lies at 166–193 (CQNCGISSRLTPAMRRGPAGPRSLCNAC). The segment at 238 to 271 (NQTTMKTDTEMVPEQEQKADVLPPTKEEDSMATS) is disordered. A compositionally biased stretch (basic and acidic residues) spans 252–271 (QEQKADVLPPTKEEDSMATS).

This sequence belongs to the type IV zinc-finger family. Class C subfamily.

Its subcellular location is the nucleus. Its function is as follows. Transcriptional activator that specifically binds 5'-GATA-3' or 5'-GAT-3' motifs within gene promoters. The sequence is that of GATA transcription factor 19 from Oryza sativa subsp. japonica (Rice).